A 425-amino-acid polypeptide reads, in one-letter code: Elongation factor 1-alpha (425 aa).

One can recognise a tr-type G domain in the interval 5 to 221 (KPHMNLAVIG…DTFKEPSKPT (217 aa)). The tract at residues 14 to 21 (GHIDHGKS) is G1. 14 to 21 (GHIDHGKS) contacts GTP. Ser-21 serves as a coordination point for Mg(2+). Residues 70-74 (GITID) form a G2 region. Positions 91 to 94 (DCPG) are G3. Residues 91–95 (DCPGH) and 146–149 (NKMD) each bind GTP. Residues 146-149 (NKMD) are G4. The G5 stretch occupies residues 185–187 (SSL).

Belongs to the TRAFAC class translation factor GTPase superfamily. Classic translation factor GTPase family. EF-Tu/EF-1A subfamily.

Its subcellular location is the cytoplasm. It carries out the reaction GTP + H2O = GDP + phosphate + H(+). Its function is as follows. GTP hydrolase that promotes the GTP-dependent binding of aminoacyl-tRNA to the A-site of ribosomes during protein biosynthesis. The polypeptide is Elongation factor 1-alpha (Methanoregula boonei (strain DSM 21154 / JCM 14090 / 6A8)).